A 120-amino-acid polypeptide reads, in one-letter code: MAQDNKATDRRRARVRRTLRARAYGKPRLSVFRSSKQIYCQIIDDEAGLTLAAASSLEKSARESLKTGADVEAARAIGKLIAERATAAGVTDVVFDRGSYLYHGRVKALAEGAREGGLNF.

The protein belongs to the universal ribosomal protein uL18 family. As to quaternary structure, part of the 50S ribosomal subunit; part of the 5S rRNA/L5/L18/L25 subcomplex. Contacts the 5S and 23S rRNAs.

In terms of biological role, this is one of the proteins that bind and probably mediate the attachment of the 5S RNA into the large ribosomal subunit, where it forms part of the central protuberance. The chain is Large ribosomal subunit protein uL18 from Methylocella silvestris (strain DSM 15510 / CIP 108128 / LMG 27833 / NCIMB 13906 / BL2).